The primary structure comprises 696 residues: MSAENNQLSGASPPHPPTTPQYSTQNLPSEKEDTEVELDEESLQDESPFSPEGESLEDKEYLEEEEDLEEEEYLGKEEYLKEEEYLGKEEHLEEEEYLEKAGYLEEEEYIEEEEYLGKEGYLEEEEYLGKEEHLEEEEYLGKEGYLEKEDYIEEVDYLGKKAYLEEEEYLGKKSYLEEEKALEKEENLEEEEALEKEENLDGKENLYKKYLKEPKASYSSQTMLLRDARSPDAGPSQVTTFLTVPLTFATPSPVSESATESSELLLTLYRRSQASQTDWCYDRTAVKSLKSKSETEQETTTKLAPEEHVNTKVQQKKEENVLEFASKENFWDGITDESIDKLEVEDLDENFLNSSYQTVFKTIIKEMAAHNELEEDFDIPLTKLLESENRWKLVIMLKKNYEKFKETILRIKRRREAQKLTEMTSFTFHLMSKPTPEKPETEEIQKPQRVVHHRKKLERDKEWIQKKTVVHQGDGKLILYPNKNVYQILFPDGTGQIHYPSGNLAMLILYAKMKKFTYIILEDSLEGRIRALINNSGNATFYDENSDIWLNLSSNLGYYFPKDKRQKAWNWWNLNIHVHAPPVQPISLKINEYIQVQIRSQDKIIFCFTYEQKQICLNLGTRYKFVIPEVLSEMKKKTILEAEPGPTAQKIRVLLGKMNRLLNYATTPDLENFIEAVSISLMDNKYLKKMLSKLWF.

The span at 1–10 (MSAENNQLSG) shows a compositional bias: polar residues. Residues 1-105 (MSAENNQLSG…EYLEKAGYLE (105 aa)) are disordered. Acidic residues-rich tracts occupy residues 32 to 44 (EDTEVELDEESLQ) and 54 to 72 (ESLEDKEYLEEEEDLEEEE). The span at 73–91 (YLGKEEYLKEEEYLGKEEH) shows a compositional bias: basic and acidic residues.

This sequence belongs to the ERICH6 family.

This Homo sapiens (Human) protein is Glutamate-rich protein 6B (ERICH6B).